Reading from the N-terminus, the 607-residue chain is Phosphogluconate dehydratase (607 aa).

Cys-156 and Cys-223 together coordinate [4Fe-4S] cluster.

It belongs to the IlvD/Edd family. [4Fe-4S] cluster serves as cofactor.

The enzyme catalyses 6-phospho-D-gluconate = 2-dehydro-3-deoxy-6-phospho-D-gluconate + H2O. Its pathway is carbohydrate metabolism; Entner-Doudoroff pathway. In terms of biological role, catalyzes the dehydration of 6-phospho-D-gluconate to 2-dehydro-3-deoxy-6-phospho-D-gluconate. This Zymomonas mobilis subsp. mobilis (strain ATCC 31821 / ZM4 / CP4) protein is Phosphogluconate dehydratase.